Here is a 311-residue protein sequence, read N- to C-terminus: MGSFNTSFEDGFILVGFSDWPQLEPILFVFIFIFYSLTLFGNTIIIALSWLDLRLHTPMYFFLSHLSLLDLCFTTSTVPQLLINLCGVDRTITRGGCVAQLFIYLALGSTECVLLVVMAFDRYAAVCRPLHYMAIMHPHLCQTLAIASWGAGFVNSLIQTGLAMAMPLCGHRLNHFFCEMPVFLKLACADTEGTEAKMFVARVIVVAVPAALILGSYVHIAHAVLRVKSTAGRRKAFGTCGSHLLVVFLFYGSAIYTYLQSIHNYSEREGKFVALFYTIITPILNPLIYTLRNKDVKGALWKVLWRGRDSG.

At 1 to 25 the chain is on the extracellular side; sequence MGSFNTSFEDGFILVGFSDWPQLEP. Asparagine 5 carries N-linked (GlcNAc...) asparagine glycosylation. Residues 26–49 form a helical membrane-spanning segment; it reads ILFVFIFIFYSLTLFGNTIIIALS. Over 50–57 the chain is Cytoplasmic; it reads WLDLRLHT. A helical transmembrane segment spans residues 58–79; sequence PMYFFLSHLSLLDLCFTTSTVP. Residues 80–100 lie on the Extracellular side of the membrane; sequence QLLINLCGVDRTITRGGCVAQ. Cysteine 97 and cysteine 188 are joined by a disulfide. The helical transmembrane segment at 101 to 120 threads the bilayer; that stretch reads LFIYLALGSTECVLLVVMAF. The Cytoplasmic portion of the chain corresponds to 121–139; it reads DRYAAVCRPLHYMAIMHPH. A helical transmembrane segment spans residues 140-158; the sequence is LCQTLAIASWGAGFVNSLI. Over 159–194 the chain is Extracellular; it reads QTGLAMAMPLCGHRLNHFFCEMPVFLKLACADTEGT. Residues 195–218 form a helical membrane-spanning segment; it reads EAKMFVARVIVVAVPAALILGSYV. Topologically, residues 219 to 235 are cytoplasmic; that stretch reads HIAHAVLRVKSTAGRRK. A helical membrane pass occupies residues 236–258; sequence AFGTCGSHLLVVFLFYGSAIYTY. The Extracellular segment spans residues 259–271; sequence LQSIHNYSEREGK. Asparagine 264 carries an N-linked (GlcNAc...) asparagine glycan. Residues 272–291 form a helical membrane-spanning segment; the sequence is FVALFYTIITPILNPLIYTL. At 292–311 the chain is on the cytoplasmic side; that stretch reads RNKDVKGALWKVLWRGRDSG.

The protein belongs to the G-protein coupled receptor 1 family.

The protein localises to the cell membrane. In terms of biological role, odorant receptor. The sequence is that of Olfactory receptor 2Y1 (OR2Y1) from Homo sapiens (Human).